A 263-amino-acid polypeptide reads, in one-letter code: Isatin hydrolase (263 aa).

62–66 (FFAWN) serves as a coordination point for substrate. The Mn(2+) site is built by His73, His77, and Asp79. Residue His83 is the Proton donor/acceptor of the active site. Residue His212 participates in substrate binding.

The protein belongs to the Cyclase 1 superfamily. In terms of assembly, homodimer. The cofactor is Mn(2+).

It carries out the reaction isatin + H2O = isatinate + H(+). With respect to regulation, inhibited by thioisatinate. Involved in the degradation of the plant hormone indole-3-acetic acid (IAA). Catalyzes the hydrolysis of the cyclic amide bond (lactam) of isatin (1H-indole-2,3-dione) to yield isatinate (2-(2-aminophenyl)-2-oxoacetate). In Roseibium aggregatum (strain ATCC 25650 / DSM 13394 / JCM 20685 / NBRC 16684 / NCIMB 2208 / IAM 12614 / B1) (Stappia aggregata), this protein is Isatin hydrolase.